A 501-amino-acid polypeptide reads, in one-letter code: Beta-secretase 1 (501 aa).

Positions 1–21 (MAQALPWLLLWMGAGVLPAHG) are cleaved as a signal peptide. Positions 22 to 45 (TQHGIRLPLRSGLGGAPLGLRLPR) are excised as a propeptide. At 22–457 (TQHGIRLPLR…PQTDESTLMT (436 aa)) the chain is on the extracellular side. A disordered region spans residues 39 to 58 (LGLRLPRETDEEPEEPGRRG). The Peptidase A1 domain occupies 75–416 (YYVEMTVGSP…DRARKRIGFA (342 aa)). Aspartate 93 is a catalytic residue. At lysine 126 the chain carries N6-acetyllysine. 3 N-linked (GlcNAc...) asparagine glycosylation sites follow: asparagine 153, asparagine 172, and asparagine 223. Disulfide bonds link cysteine 216/cysteine 420, cysteine 278/cysteine 443, and cysteine 330/cysteine 380. Residues lysine 275, lysine 279, and lysine 285 each carry the N6-acetyllysine modification. Residue aspartate 289 is part of the active site. An N6-acetyllysine mark is found at lysine 299, lysine 300, and lysine 307. N-linked (GlcNAc...) asparagine glycosylation is present at asparagine 354. The chain crosses the membrane as a helical span at residues 458–478 (IAYVMAAICALFMLPLCLMVC). Residues cysteine 474, cysteine 478, cysteine 482, and cysteine 485 are each lipidated (S-palmitoyl cysteine). Residues 479-501 (QWRCLRCLRQQHDDFADDISLLK) lie on the Cytoplasmic side of the membrane. The tract at residues 479–501 (QWRCLRCLRQQHDDFADDISLLK) is interaction with RTN3. A DXXLL motif is present at residues 496-500 (DISLL). Serine 498 is subject to Phosphoserine. A Glycyl lysine isopeptide (Lys-Gly) (interchain with G-Cter in ubiquitin) cross-link involves residue lysine 501.

Belongs to the peptidase A1 family. Monomer. Interacts (via DXXLL motif) with GGA1, GGA2 and GGA3 (via their VHS domain); the interaction highly increases when BACE1 is phosphorylated at Ser-498. Interacts with RTN1; RTN2; RTN3 and RTN4; the interaction leads to inhibition of amyloid precursor protein processing. Interacts with SNX6. Interacts with PCSK9. Interacts with NAT8 and NAT8B. Interacts with BIN1. Interacts (via extracellular domain) with ADAM10 (via extracellular domain). Interacts with SORL1; this interaction may affect binding with APP and hence reduce APP cleavage. Interacts with NRDC AND NRG1. Post-translationally, N-Glycosylated. Addition of a bisecting N-acetylglucosamine by MGAT3 blocks lysosomal targeting, further degradation and is required for maintaining stability under stress conditions. In terms of processing, acetylated in the endoplasmic reticulum at Lys-126, Lys-275, Lys-279, Lys-285, Lys-299, Lys-300 and Lys-307. Acetylation by NAT8 and NAT8B is transient and deacetylation probably occurs in the Golgi. Acetylation regulates the maturation, the transport to the plasma membrane, the stability and the expression of the protein. Palmitoylation mediates lipid raft localization. Post-translationally, ubiquitinated at Lys-501, ubiquitination leads to lysosomal degradation. Monoubiquitinated and 'Lys-63'-linked polyubitinated. Deubiquitnated by USP8; inhibits lysosomal degradation. In terms of processing, phosphorylation at Ser-498 is required for interaction with GGA1 and retrograded transport from endosomal compartments to the trans-Golgi network. Non-phosphorylated BACE1 enters a direct recycling route to the cell surface. As to expression, expressed at high levels in the brain and pancreas. In the brain, expression is highest in the substantia nigra, locus coruleus and medulla oblongata.

It localises to the cell membrane. It is found in the golgi apparatus. The protein localises to the trans-Golgi network. The protein resides in the endoplasmic reticulum. Its subcellular location is the endosome. It localises to the cell surface. It is found in the cytoplasmic vesicle membrane. The protein localises to the membrane raft. The protein resides in the lysosome. Its subcellular location is the late endosome. It localises to the early endosome. It is found in the recycling endosome. The protein localises to the cell projection. The protein resides in the axon. Its subcellular location is the dendrite. The enzyme catalyses Broad endopeptidase specificity. Cleaves Glu-Val-Asn-Leu-|-Asp-Ala-Glu-Phe in the Swedish variant of Alzheimer's amyloid precursor protein.. With respect to regulation, inhibited by RTN3 and RTN4. Its function is as follows. Responsible for the proteolytic processing of the amyloid precursor protein (APP). Cleaves at the N-terminus of the A-beta peptide sequence, between residues 671 and 672 of APP, leads to the generation and extracellular release of beta-cleaved soluble APP, and a corresponding cell-associated C-terminal fragment which is later released by gamma-secretase. Cleaves CHL1. This is Beta-secretase 1 from Homo sapiens (Human).